Consider the following 236-residue polypeptide: Biosynthetic peptidoglycan transglycosylase (236 aa).

Residues 12–31 (ALLWFAASSIVLVLVFRWVP) traverse the membrane as a helical segment.

This sequence belongs to the glycosyltransferase 51 family.

Its subcellular location is the cell inner membrane. The catalysed reaction is [GlcNAc-(1-&gt;4)-Mur2Ac(oyl-L-Ala-gamma-D-Glu-L-Lys-D-Ala-D-Ala)](n)-di-trans,octa-cis-undecaprenyl diphosphate + beta-D-GlcNAc-(1-&gt;4)-Mur2Ac(oyl-L-Ala-gamma-D-Glu-L-Lys-D-Ala-D-Ala)-di-trans,octa-cis-undecaprenyl diphosphate = [GlcNAc-(1-&gt;4)-Mur2Ac(oyl-L-Ala-gamma-D-Glu-L-Lys-D-Ala-D-Ala)](n+1)-di-trans,octa-cis-undecaprenyl diphosphate + di-trans,octa-cis-undecaprenyl diphosphate + H(+). The protein operates within cell wall biogenesis; peptidoglycan biosynthesis. Functionally, peptidoglycan polymerase that catalyzes glycan chain elongation from lipid-linked precursors. In Pseudomonas putida (strain GB-1), this protein is Biosynthetic peptidoglycan transglycosylase.